We begin with the raw amino-acid sequence, 528 residues long: Major facilitator-type transporter psiT2 (528 aa).

The tract at residues 1–20 (MSPERSASLEPDEHSSLLSD) is disordered. A run of 5 helical transmembrane segments spans residues 87 to 107 (FYSG…IFML), 125 to 145 (LGVA…MMLV), 148 to 168 (VCAG…SELT), 174 to 194 (ALVV…GPLI), and 220 to 240 (FLPS…GYFF). Residues 260–270 (STSSISSRTST) are compositionally biased toward low complexity. The segment at 260–299 (STSSISSRTSTLYGATDDHNRDASESTALSPEEAEDEIDS) is disordered. 6 helical membrane passes run 322-342 (FLMF…FTAV), 357-377 (AFSV…PWVL), 388-408 (FCMF…PLAQ), 424-444 (GLLY…VMAF), 460-479 (LATA…ALCP), and 493-513 (NILG…AGVW).

The protein belongs to the major facilitator superfamily. TCR/Tet family.

Its subcellular location is the membrane. Functionally, major facilitator-type transporter; part of the gene cluster that mediates the biosynthesis of psilocybin, a psychotropic tryptamine-derived natural product. The protein is Major facilitator-type transporter psiT2 of Psilocybe cyanescens.